The primary structure comprises 873 residues: Alanine--tRNA ligase (873 aa).

H562, H566, C664, and H668 together coordinate Zn(2+).

It belongs to the class-II aminoacyl-tRNA synthetase family. It depends on Zn(2+) as a cofactor.

The protein resides in the cytoplasm. It catalyses the reaction tRNA(Ala) + L-alanine + ATP = L-alanyl-tRNA(Ala) + AMP + diphosphate. In terms of biological role, catalyzes the attachment of alanine to tRNA(Ala) in a two-step reaction: alanine is first activated by ATP to form Ala-AMP and then transferred to the acceptor end of tRNA(Ala). Also edits incorrectly charged Ser-tRNA(Ala) and Gly-tRNA(Ala) via its editing domain. In Photobacterium profundum (strain SS9), this protein is Alanine--tRNA ligase.